Here is a 772-residue protein sequence, read N- to C-terminus: Probable adenosine deaminase (772 aa).

Residues histidine 22 and histidine 24 each coordinate Zn(2+). Residues histidine 24, aspartate 26, and glycine 180 each contribute to the substrate site. Residue histidine 207 participates in Zn(2+) binding. Glutamate 210 acts as the Proton donor in catalysis. Aspartate 288 lines the Zn(2+) pocket.

It belongs to the metallo-dependent hydrolases superfamily. Adenosine and AMP deaminases family. It depends on Zn(2+) as a cofactor.

It catalyses the reaction adenosine + H2O + H(+) = inosine + NH4(+). Its function is as follows. Catalyzes the hydrolytic deamination of adenosine. Plays an important role in purine metabolism and in adenosine homeostasis, and may thereby contribute to cellular signaling events. In Dictyostelium discoideum (Social amoeba), this protein is Probable adenosine deaminase (ada).